The following is a 120-amino-acid chain: Immunoglobulin lambda variable 4-60 (120 aa).

Residues 1-21 (MAWTPLLLLFPLLLHCTGSLS) form the signal peptide. The tract at residues 22–46 (QPVLTQSSSASASLGSSVKLTCTLS) is framework-1. The region spanning 23–120 (PVLTQSSSAS…YYCETWDSNT (98 aa)) is the Ig-like domain. Cys-43 and Cys-113 are disulfide-bonded. The interval 47-53 (SGHSSYI) is complementarity-determining-1. Positions 54–70 (IAWHQQQPGKAPRYLMK) are framework-2. Residues 71 to 77 (LEGSGSY) are complementarity-determining-2. The framework-3 stretch occupies residues 78–113 (NKGSGVPDRFSGSSSGADRYLTISNLQFEDEADYYC). A complementarity-determining-3 region spans residues 114–120 (ETWDSNT).

As to quaternary structure, immunoglobulins are composed of two identical heavy chains and two identical light chains; disulfide-linked.

The protein resides in the secreted. The protein localises to the cell membrane. In terms of biological role, v region of the variable domain of immunoglobulin light chains that participates in the antigen recognition. Immunoglobulins, also known as antibodies, are membrane-bound or secreted glycoproteins produced by B lymphocytes. In the recognition phase of humoral immunity, the membrane-bound immunoglobulins serve as receptors which, upon binding of a specific antigen, trigger the clonal expansion and differentiation of B lymphocytes into immunoglobulins-secreting plasma cells. Secreted immunoglobulins mediate the effector phase of humoral immunity, which results in the elimination of bound antigens. The antigen binding site is formed by the variable domain of one heavy chain, together with that of its associated light chain. Thus, each immunoglobulin has two antigen binding sites with remarkable affinity for a particular antigen. The variable domains are assembled by a process called V-(D)-J rearrangement and can then be subjected to somatic hypermutations which, after exposure to antigen and selection, allow affinity maturation for a particular antigen. In Homo sapiens (Human), this protein is Immunoglobulin lambda variable 4-60.